The chain runs to 772 residues: Calcium-binding mitochondrial carrier protein (772 aa).

Positions 1-377 (MFANRVRQAQ…SISDFEKSTG (377 aa)) are N-terminal domain. EF-hand domains are found at residues 132–165 (LDAD…ELMA), 166–201 (KPEA…SLDP), 235–270 (LQQE…VKLR), and 347–382 (ITPL…NINK). Residues Asp-145, Asp-147, Thr-149, Tyr-151, Glu-156, Asp-179, Asp-181, Asn-183, Tyr-185, and Asp-190 each coordinate Ca(2+). Positions 360, 362, 364, 366, and 371 each coordinate Ca(2+). Residues 378–422 (LNINKIGGGTNYSDSYPSDSHVTIQNSSTTPSPSTPITNTAAAIA) are linker loop domain. Positions 432–720 (AQQVLESIEN…KALLPDAEYK (289 aa)) are carrier domain. Solcar repeat units follow at residues 436 to 526 (LESI…LRDL), 535 to 616 (IYFP…MKTI), and 624 to 712 (LGPM…LQKA). The next 6 helical transmembrane spans lie at 442–459 (FALG…VYPI), 501–520 (GILP…LTVN), 545–558 (GFAG…TNPL), 591–610 (GAGA…FPTY), 630–647 (LLAG…VTPA), and 687–706 (GALA…LVSY). The C-terminal domain stretch occupies residues 721–772 (PPTNAPITQKDFDVIRGNTNTVQRVIDMESKFGTLHQTRDNNKSSNGGENKN). The tract at residues 751 to 772 (KFGTLHQTRDNNKSSNGGENKN) is disordered. The span at 763 to 772 (KSSNGGENKN) shows a compositional bias: low complexity.

Belongs to the mitochondrial carrier (TC 2.A.29) family. In terms of assembly, homodimer (via N-terminus).

Its subcellular location is the mitochondrion inner membrane. In terms of biological role, mitochondrial and calcium-binding carrier that catalyzes the calcium-dependent exchange of cytoplasmic glutamate with mitochondrial aspartate across the mitochondrial inner membrane. In Dictyostelium discoideum (Social amoeba), this protein is Calcium-binding mitochondrial carrier protein (mcfO).